We begin with the raw amino-acid sequence, 377 residues long: Cytochrome b (377 aa).

4 helical membrane-spanning segments follow: residues 36 to 56, 80 to 102, 115 to 135, and 181 to 201; these read WGSLLGIFLIIPIITGLFLAM, WLIRFIHVNGASFFFIFLYLHMA, VWLIGCTIYVVSMATAFMGYI, and FFVLHFILPFIILALSIIHLI. Heme b-binding residues include His86 and His100. Positions 185 and 199 each coordinate heme b. An a ubiquinone-binding site is contributed by His204. 4 helical membrane-spanning segments follow: residues 227-247, 291-311, 326-346, and 354-374; these read YSSKDLMFLLLLMMIMMVIIF, LGGVLTMVFSILILFLLPFIS, LFWSFVVNMLILTWIGGMPVV, and LTSTFLYFIIILIYSNSFLMI.

Belongs to the cytochrome b family. In terms of assembly, the main subunits of complex b-c1 are: cytochrome b, cytochrome c1 and the Rieske protein. Heme b serves as cofactor.

It is found in the mitochondrion inner membrane. Functionally, component of the ubiquinol-cytochrome c reductase complex (complex III or cytochrome b-c1 complex) that is part of the mitochondrial respiratory chain. The b-c1 complex mediates electron transfer from ubiquinol to cytochrome c. Contributes to the generation of a proton gradient across the mitochondrial membrane that is then used for ATP synthesis. The chain is Cytochrome b (mt:Cyt-b) from Myzostoma seymourcollegiorum (Polychaete worm).